Reading from the N-terminus, the 838-residue chain is DNA gyrase subunit A (838 aa).

The Topo IIA-type catalytic domain maps to 41-510; it reads LPEVRDGLKP…ADGDVSDEDL (470 aa). The O-(5'-phospho-DNA)-tyrosine intermediate role is filled by Tyr-129. The GyrA-box motif lies at 537-543; sequence QKRGGKG.

Belongs to the type II topoisomerase GyrA/ParC subunit family. Heterotetramer, composed of two GyrA and two GyrB chains. In the heterotetramer, GyrA contains the active site tyrosine that forms a transient covalent intermediate with DNA, while GyrB binds cofactors and catalyzes ATP hydrolysis. Mg(2+) serves as cofactor.

It localises to the cytoplasm. The catalysed reaction is ATP-dependent breakage, passage and rejoining of double-stranded DNA.. DNA supercoiling is inhibited by EDTA, novobiocin, coumermycin and ciprofloxacin. Functionally, a type II topoisomerase that negatively supercoils closed circular double-stranded (ds) DNA in an ATP-dependent manner to modulate DNA topology and maintain chromosomes in an underwound state. Also catalyzes the interconversion of other topological isomers of double-stranded DNA rings, including catenanes and knotted rings. Relaxes negatively supercoiled DNA in an ATP-independent manner. A linear reaction intermediate can be trapped in the presence of the antibiotic ciprofloxacin. Negative supercoiling favors strand separation, and DNA replication, transcription, recombination and repair, all of which involve strand separation. Type II topoisomerases break and join 2 DNA strands simultaneously in an ATP-dependent manner. This is DNA gyrase subunit A from Mycobacterium bovis (strain BCG / Pasteur 1173P2).